The chain runs to 329 residues: Biotin synthase (329 aa).

Residues 46-275 enclose the Radical SAM core domain; that stretch reads YYGNKVKLNM…TKEIRISGGR (230 aa). [4Fe-4S] cluster-binding residues include Cys64, Cys68, and Cys71. Residues Cys108, Cys140, Cys200, and Arg270 each contribute to the [2Fe-2S] cluster site.

Belongs to the radical SAM superfamily. Biotin synthase family. In terms of assembly, homodimer. [4Fe-4S] cluster is required as a cofactor. Requires [2Fe-2S] cluster as cofactor.

It catalyses the reaction (4R,5S)-dethiobiotin + (sulfur carrier)-SH + 2 reduced [2Fe-2S]-[ferredoxin] + 2 S-adenosyl-L-methionine = (sulfur carrier)-H + biotin + 2 5'-deoxyadenosine + 2 L-methionine + 2 oxidized [2Fe-2S]-[ferredoxin]. It participates in cofactor biosynthesis; biotin biosynthesis; biotin from 7,8-diaminononanoate: step 2/2. Catalyzes the conversion of dethiobiotin (DTB) to biotin by the insertion of a sulfur atom into dethiobiotin via a radical-based mechanism. This chain is Biotin synthase, found in Anoxybacillus flavithermus (strain DSM 21510 / WK1).